The primary structure comprises 110 residues: UPF0060 membrane protein Mfla_2554 (110 aa).

Transmembrane regions (helical) follow at residues 7–27, 33–53, 61–81, and 83–103; these read VALF…PYLW, SPLL…LLTL, VYAA…WVVD, and IIPS…MAII.

The protein belongs to the UPF0060 family.

It is found in the cell inner membrane. The protein is UPF0060 membrane protein Mfla_2554 of Methylobacillus flagellatus (strain ATCC 51484 / DSM 6875 / VKM B-1610 / KT).